Here is a 764-residue protein sequence, read N- to C-terminus: Elongation factor G, mitochondrial (764 aa).

Residues 1–23 (MIRSLRAVSRLGARGFSSFAAAR) constitute a mitochondrion transit peptide. One can recognise a tr-type G domain in the interval 56 to 337 (ARMRNIGISA…AICEYLPDPS (282 aa)). GTP is bound by residues 65–72 (AHIDSGKT), 136–140 (DTPGH), and 190–193 (NKMD).

The protein belongs to the TRAFAC class translation factor GTPase superfamily. Classic translation factor GTPase family. EF-G/EF-2 subfamily.

Its subcellular location is the mitochondrion. It participates in protein biosynthesis; polypeptide chain elongation. Mitochondrial GTPase that catalyzes the GTP-dependent ribosomal translocation step during translation elongation. During this step, the ribosome changes from the pre-translocational (PRE) to the post-translocational (POST) state as the newly formed A-site-bound peptidyl-tRNA and P-site-bound deacylated tRNA move to the P and E sites, respectively. Catalyzes the coordinated movement of the two tRNA molecules, the mRNA and conformational changes in the ribosome. This Yarrowia lipolytica (strain CLIB 122 / E 150) (Yeast) protein is Elongation factor G, mitochondrial.